The primary structure comprises 429 residues: Probable M18 family aminopeptidase 2 (429 aa).

3 residues coordinate Zn(2+): His-82, His-156, and His-401.

The protein belongs to the peptidase M18 family. It depends on Zn(2+) as a cofactor.

The polypeptide is Probable M18 family aminopeptidase 2 (Pseudomonas paraeruginosa (strain DSM 24068 / PA7) (Pseudomonas aeruginosa (strain PA7))).